The primary structure comprises 279 residues: Troponin T, fast skeletal muscle (279 aa).

Over residues 1 to 21 the composition is skewed to acidic residues; sequence MSDEEVEHVEEQYEEEEEAQE. The tract at residues 1–82 is disordered; sequence MSDEEVEHVE…EKVDFDDIQK (82 aa). Ser-2 carries the N-acetylserine modification. Position 2 is a phosphoserine (Ser-2). Basic and acidic residues-rich tracts occupy residues 28–49 and 70–82; these read EVHEPAPEVHVPEEVHEDALED and PEGEKVDFDDIQK. Ser-98 carries the post-translational modification Phosphoserine. Basic and acidic residues predominate over residues 121 to 163; sequence RAERAEQQRIRAEKERERQNRLAEEKARREEEDAKRRAEEDLK. The tract at residues 121 to 200 is disordered; it reads RAERAEQQRI…TAREMKKKIL (80 aa). Residues Ser-169, Ser-176, and Ser-177 each carry the phosphoserine modification. The span at 191 to 200 shows a compositional bias: basic and acidic residues; that stretch reads TAREMKKKIL. Phosphoserine is present on Ser-213. At Tyr-229 the chain carries Phosphotyrosine.

It belongs to the troponin T family.

Troponin T is the tropomyosin-binding subunit of troponin, the thin filament regulatory complex which confers calcium-sensitivity to striated muscle actomyosin ATPase activity. This Oryctolagus cuniculus (Rabbit) protein is Troponin T, fast skeletal muscle (TNNT3).